Reading from the N-terminus, the 571-residue chain is Proline--tRNA ligase (571 aa).

It belongs to the class-II aminoacyl-tRNA synthetase family. ProS type 1 subfamily. Homodimer.

The protein localises to the cytoplasm. The enzyme catalyses tRNA(Pro) + L-proline + ATP = L-prolyl-tRNA(Pro) + AMP + diphosphate. Functionally, catalyzes the attachment of proline to tRNA(Pro) in a two-step reaction: proline is first activated by ATP to form Pro-AMP and then transferred to the acceptor end of tRNA(Pro). As ProRS can inadvertently accommodate and process non-cognate amino acids such as alanine and cysteine, to avoid such errors it has two additional distinct editing activities against alanine. One activity is designated as 'pretransfer' editing and involves the tRNA(Pro)-independent hydrolysis of activated Ala-AMP. The other activity is designated 'posttransfer' editing and involves deacylation of mischarged Ala-tRNA(Pro). The misacylated Cys-tRNA(Pro) is not edited by ProRS. This Pseudomonas paraeruginosa (strain DSM 24068 / PA7) (Pseudomonas aeruginosa (strain PA7)) protein is Proline--tRNA ligase.